Here is a 508-residue protein sequence, read N- to C-terminus: Photosystem II CP47 reaction center protein (508 aa).

The next 6 membrane-spanning stretches (helical) occupy residues 21-36 (AVHI…WAGS), 101-115 (IVFS…IWHW), 140-156 (GIHL…FGAF), 203-218 (IAAG…FHLS), 237-252 (VLSS…AFVV), and 457-472 (SFAL…HGAR).

This sequence belongs to the PsbB/PsbC family. PsbB subfamily. As to quaternary structure, PSII is composed of 1 copy each of membrane proteins PsbA, PsbB, PsbC, PsbD, PsbE, PsbF, PsbH, PsbI, PsbJ, PsbK, PsbL, PsbM, PsbT, PsbX, PsbY, PsbZ, Psb30/Ycf12, at least 3 peripheral proteins of the oxygen-evolving complex and a large number of cofactors. It forms dimeric complexes. Binds multiple chlorophylls. PSII binds additional chlorophylls, carotenoids and specific lipids. is required as a cofactor.

It is found in the plastid. It localises to the chloroplast thylakoid membrane. One of the components of the core complex of photosystem II (PSII). It binds chlorophyll and helps catalyze the primary light-induced photochemical processes of PSII. PSII is a light-driven water:plastoquinone oxidoreductase, using light energy to abstract electrons from H(2)O, generating O(2) and a proton gradient subsequently used for ATP formation. The chain is Photosystem II CP47 reaction center protein from Daucus carota (Wild carrot).